The sequence spans 173 residues: Protein-export protein SecB 1 (173 aa).

It belongs to the SecB family. In terms of assembly, homotetramer, a dimer of dimers. One homotetramer interacts with 1 SecA dimer.

The protein resides in the cytoplasm. Its function is as follows. One of the proteins required for the normal export of preproteins out of the cell cytoplasm. It is a molecular chaperone that binds to a subset of precursor proteins, maintaining them in a translocation-competent state. It also specifically binds to its receptor SecA. The sequence is that of Protein-export protein SecB 1 from Gluconobacter oxydans (strain 621H) (Gluconobacter suboxydans).